Here is a 147-residue protein sequence, read N- to C-terminus: Large ribosomal subunit protein bL9 (147 aa).

It belongs to the bacterial ribosomal protein bL9 family.

Functionally, binds to the 23S rRNA. This is Large ribosomal subunit protein bL9 from Cytophaga hutchinsonii (strain ATCC 33406 / DSM 1761 / CIP 103989 / NBRC 15051 / NCIMB 9469 / D465).